Here is a 256-residue protein sequence, read N- to C-terminus: Flap endonuclease Xni (256 aa).

D105 lines the Mg(2+) pocket. The 5'-3' exonuclease domain occupies 163-256; sequence RSQLIDYLAL…QFRIKKPDSE (94 aa). K(+) contacts are provided by L172, A173, P181, V183, and I186. The tract at residues 185–190 is interaction with DNA; the sequence is GIGPKS.

The protein belongs to the Xni family. Requires Mg(2+) as cofactor. The cofactor is K(+).

Its function is as follows. Has flap endonuclease activity. During DNA replication, flap endonucleases cleave the 5'-overhanging flap structure that is generated by displacement synthesis when DNA polymerase encounters the 5'-end of a downstream Okazaki fragment. The protein is Flap endonuclease Xni of Shewanella pealeana (strain ATCC 700345 / ANG-SQ1).